Consider the following 220-residue polypeptide: Ribonuclease P protein component 3 (220 aa).

Belongs to the eukaryotic/archaeal RNase P protein component 3 family. In terms of assembly, consists of a catalytic RNA component and at least 4-5 protein subunits.

It is found in the cytoplasm. The enzyme catalyses Endonucleolytic cleavage of RNA, removing 5'-extranucleotides from tRNA precursor.. Functionally, part of ribonuclease P, a protein complex that generates mature tRNA molecules by cleaving their 5'-ends. In Thermococcus kodakarensis (strain ATCC BAA-918 / JCM 12380 / KOD1) (Pyrococcus kodakaraensis (strain KOD1)), this protein is Ribonuclease P protein component 3.